Here is a 463-residue protein sequence, read N- to C-terminus: Alpha-L-arabinofuranosidase B (463 aa).

Positions Met-1–Ala-26 are cleaved as a signal peptide. The segment at Gly-27 to Lys-308 is catalytic. Cys-29 and Cys-39 form a disulfide bridge. N-linked (GlcNAc...) asparagine glycosylation is present at Asn-81. Intrachain disulfides connect Cys-89–Cys-94 and Cys-184–Cys-185. Residue Asp-227 coordinates substrate. Residue Glu-229 is the Nucleophile of the active site. Substrate is bound at residue Asn-230. Residue Asn-280 is glycosylated (N-linked (GlcNAc...) asparagine). Substrate is bound at residue Gly-304. The interval Leu-309–Ala-463 is ABD. Asn-332 carries N-linked (GlcNAc...) asparagine glycosylation. Residues Cys-366 and Cys-404 are joined by a disulfide bond. Residues His-381, Asn-383, Phe-384, His-428, Asp-430, Leu-433, and Asp-453 each coordinate substrate.

Belongs to the glycosyl hydrolase 54 family. In terms of processing, residue Asn-280 is mannosylated with up to 7 mannose residues.

The protein localises to the secreted. It carries out the reaction Hydrolysis of terminal non-reducing alpha-L-arabinofuranoside residues in alpha-L-arabinosides.. It functions in the pathway glycan metabolism; L-arabinan degradation. Secreted alpha-L-arabinofuranosidase that actively hydrolyzes p-NP-alpha-L-arabinofuranoside and is specific for furanose configuration of the carbohydrate ring. Also exhibits significant activity against polymeric arabinose-containing substrates such as arabinan and arabinoxylan, a major component of plant hemicellulose. The chain is Alpha-L-arabinofuranosidase B (abfB) from Penicillium canescens.